The following is a 419-amino-acid chain: Histidine--tRNA ligase (419 aa).

The protein belongs to the class-II aminoacyl-tRNA synthetase family. As to quaternary structure, homodimer.

The protein localises to the cytoplasm. It carries out the reaction tRNA(His) + L-histidine + ATP = L-histidyl-tRNA(His) + AMP + diphosphate + H(+). This Desulfatibacillum aliphaticivorans protein is Histidine--tRNA ligase.